The chain runs to 314 residues: HTH-type transcriptional regulator LeuO (314 aa).

Positions 22-79 (VDLNLLTVFDAVMQEQNITRAAHVLGMSQPAVSNAVARLKVMFNDELFVRYGRGIQPT) constitute an HTH lysR-type domain. A DNA-binding region (H-T-H motif) is located at residues 39–58 (ITRAAHVLGMSQPAVSNAVA).

It belongs to the LysR transcriptional regulatory family.

Its function is as follows. A global transcription factor. Activates transcription of the 9 following operons; yjjQ-bglJ, yjjP, acrEF, ybdO, yjcRQP, casABCDE12, rhsD-ybbC, fepE and gltF, in most cases it probably interferes with silencing by H-NS and activates transcription. Represses transcription of the 3 following operons; uxaCA, sdaCB and btsT. H-NS repression of the bgl operon, leading to the ability to metabolize some beta-glucosides. It also directly activates the bgl operon. Activation is H-NS and BglJ-RcsB independent. The polypeptide is HTH-type transcriptional regulator LeuO (leuO) (Escherichia coli (strain K12)).